Here is a 429-residue protein sequence, read N- to C-terminus: Adenylosuccinate synthetase (429 aa).

GTP contacts are provided by residues 12-18 (GDEGKGK) and 40-42 (GHT). Residue Asp13 is the Proton acceptor of the active site. Residues Asp13 and Gly40 each contribute to the Mg(2+) site. IMP is bound by residues 13 to 16 (DEGK), 38 to 41 (NAGH), Thr128, Arg142, Gln223, Thr238, and Arg302. His41 acts as the Proton donor in catalysis. 298 to 304 (VNTGRPR) contacts substrate. GTP-binding positions include Arg304, 330-332 (KLD), and 412-414 (GVG).

It belongs to the adenylosuccinate synthetase family. In terms of assembly, homodimer. Requires Mg(2+) as cofactor.

The protein resides in the cytoplasm. The catalysed reaction is IMP + L-aspartate + GTP = N(6)-(1,2-dicarboxyethyl)-AMP + GDP + phosphate + 2 H(+). The protein operates within purine metabolism; AMP biosynthesis via de novo pathway; AMP from IMP: step 1/2. Its function is as follows. Plays an important role in the de novo pathway of purine nucleotide biosynthesis. Catalyzes the first committed step in the biosynthesis of AMP from IMP. This Arthrobacter sp. (strain FB24) protein is Adenylosuccinate synthetase.